A 342-amino-acid polypeptide reads, in one-letter code: Ribosomal RNA small subunit methyltransferase C (342 aa).

The protein belongs to the methyltransferase superfamily. RsmC family. Monomer.

The protein localises to the cytoplasm. It catalyses the reaction guanosine(1207) in 16S rRNA + S-adenosyl-L-methionine = N(2)-methylguanosine(1207) in 16S rRNA + S-adenosyl-L-homocysteine + H(+). Specifically methylates the guanine in position 1207 of 16S rRNA in the 30S particle. The protein is Ribosomal RNA small subunit methyltransferase C of Salmonella agona (strain SL483).